Here is a 721-residue protein sequence, read N- to C-terminus: Ribonucleoside-diphosphate reductase subunit alpha (721 aa).

Residues threonine 168, 184 to 185 (SC), glycine 213, 393 to 397 (NLCSE), and 595 to 599 (PTGSI) each bind substrate. An intrachain disulfide couples cysteine 185 to cysteine 422. The active-site Proton acceptor is the asparagine 393. The active-site Cysteine radical intermediate is the cysteine 395. The active-site Proton acceptor is the glutamate 397.

Belongs to the ribonucleoside diphosphate reductase large chain family. As to quaternary structure, tetramer of two alpha and two beta subunits.

It catalyses the reaction a 2'-deoxyribonucleoside 5'-diphosphate + [thioredoxin]-disulfide + H2O = a ribonucleoside 5'-diphosphate + [thioredoxin]-dithiol. Its activity is regulated as follows. Under complex allosteric control mediated by deoxynucleoside triphosphates and ATP binding. The type of nucleotide bound at the specificity site determines substrate preference. It seems probable that ATP makes the enzyme reduce CDP and UDP, dGTP favors ADP reduction and dTTP favors GDP reduction. Its function is as follows. Provides the precursors necessary for DNA synthesis. Catalyzes the biosynthesis of deoxyribonucleotides from the corresponding ribonucleotides. This is Ribonucleoside-diphosphate reductase subunit alpha (nrdE) from Mycobacterium leprae (strain TN).